We begin with the raw amino-acid sequence, 300 residues long: MALSPQLFFALYVSAFALGFPLNLLAIRGAVARARLRLTPNLVYTLHLACSDLLLAITLPVKAVEALASGAWPLPLPLCPVFVLVHFAPLYAGGGFLAALSAGRYLGAAFPFGYQAVRRPRYSWGVCVAIWALVLCHMGLVLGLEAPGGWLNTTSSSLGINTPVNGSPVCLEAWDPNSARPARLSFSILLFFVPLVITAFCYVGCLRALAHSGLSHKRKLRAAWAAGGAFLTLLLCLGPYNASNVASFVNPDLGGSWRKLGLITGSWSVVLNPLVTGYLGASPGRGTVCTTRTQGGTIQK.

The Extracellular portion of the chain corresponds to 1 to 8 (MALSPQLF). Residues 9–31 (FALYVSAFALGFPLNLLAIRGAV) form a helical membrane-spanning segment. Residues 32–41 (ARARLRLTPN) lie on the Cytoplasmic side of the membrane. Residues 42–64 (LVYTLHLACSDLLLAITLPVKAV) form a helical membrane-spanning segment. At 65–79 (EALASGAWPLPLPLC) the chain is on the extracellular side. Cysteine 79 and cysteine 170 are disulfide-bonded. Residues 80-101 (PVFVLVHFAPLYAGGGFLAALS) traverse the membrane as a helical segment. The Cytoplasmic segment spans residues 102-121 (AGRYLGAAFPFGYQAVRRPR). Residues 122-142 (YSWGVCVAIWALVLCHMGLVL) traverse the membrane as a helical segment. At 143 to 178 (GLEAPGGWLNTTSSSLGINTPVNGSPVCLEAWDPNS) the chain is on the extracellular side. A glycan (N-linked (GlcNAc...) asparagine) is linked at asparagine 152. Residues 179-200 (ARPARLSFSILLFFVPLVITAF) form a helical membrane-spanning segment. The Cytoplasmic portion of the chain corresponds to 201-223 (CYVGCLRALAHSGLSHKRKLRAA). The chain crosses the membrane as a helical span at residues 224–248 (WAAGGAFLTLLLCLGPYNASNVASF). Topologically, residues 249 to 256 (VNPDLGGS) are extracellular. The chain crosses the membrane as a helical span at residues 257–279 (WRKLGLITGSWSVVLNPLVTGYL). The Cytoplasmic portion of the chain corresponds to 280 to 300 (GASPGRGTVCTTRTQGGTIQK).

It belongs to the G-protein coupled receptor 1 family.

The protein resides in the cell membrane. Functionally, G-protein coupled receptor for medium and long chain saturated and unsaturated fatty acids that plays an important role in glucose homeostasis. Fatty acid binding increases glucose-stimulated insulin secretion, and may also enhance the secretion of glucagon-like peptide 1 (GLP-1). May also play a role in bone homeostasis; receptor signaling activates pathways that inhibit osteoclast differentiation. Ligand binding leads to a conformation change that triggers signaling via G-proteins that activate phospholipase C, leading to an increase of the intracellular calcium concentration. Seems to act through a G(q) and G(i)-mediated pathway. Mediates the anti-inflammatory effects of omega-3 polyunsaturated fatty acids (PUFAs) via inhibition of NLRP3 inflammasome activation. This Mesocricetus auratus (Golden hamster) protein is Free fatty acid receptor 1 (FFAR1).